We begin with the raw amino-acid sequence, 397 residues long: MRSPSAAWLLGAAILLAASLSCSGTIQGTNRSSKGRSLIGKVDGTSHVTGKGVTVETVFSVDEFSASVLTGKLTTVFLPIVYTIVFVVGLPSNGMALWVFLFRTKKKHPAVIYMANLALADLLSVIWFPLKIAYHIHGNNWIYGEALCNVLIGFFYGNMYCSILFMTCLSVQRYWVIVNPMGHSRKKANIAIGISLAIWLLILLVTIPLYVVKQTIFIPALNITTCHDVLPEQLLVGDMFNYFLSLAIGVFLFPAFLTASAYVLMIRMLRSSAMDENSEKKRKRAIKLIVTVLAMYLICFTPSNLLLVVHYFLIKSQGQSHVYALYIVALCLSTLNSCIDPFVYYFVSHDFRDHAKNALLCRSVRTVKQMQVSLTSKKHSRKSSSYSSSSTTVKTSY.

The first 25 residues, 1 to 25 (MRSPSAAWLLGAAILLAASLSCSGT), serve as a signal peptide directing secretion. Residues 26-36 (IQGTNRSSKGR) constitute a propeptide, removed for receptor activation. Asparagine 30 is a glycosylation site (N-linked (GlcNAc...) asparagine). At 37–71 (SLIGKVDGTSHVTGKGVTVETVFSVDEFSASVLTG) the chain is on the extracellular side. The chain crosses the membrane as a helical span at residues 72-101 (KLTTVFLPIVYTIVFVVGLPSNGMALWVFL). Residues 102 to 108 (FRTKKKH) lie on the Cytoplasmic side of the membrane. A helical transmembrane segment spans residues 109–137 (PAVIYMANLALADLLSVIWFPLKIAYHIH). At 138–149 (GNNWIYGEALCN) the chain is on the extracellular side. Cysteines 148 and 226 form a disulfide. The helical transmembrane segment at 150 to 177 (VLIGFFYGNMYCSILFMTCLSVQRYWVI) threads the bilayer. At 178–183 (VNPMGH) the chain is on the cytoplasmic side. The chain crosses the membrane as a helical span at residues 184 to 211 (SRKKANIAIGISLAIWLLILLVTIPLYV). Over 212-235 (VKQTIFIPALNITTCHDVLPEQLL) the chain is Extracellular. A glycan (N-linked (GlcNAc...) asparagine) is linked at asparagine 222. Residues 236 to 269 (VGDMFNYFLSLAIGVFLFPAFLTASAYVLMIRML) form a helical membrane-spanning segment. Residues 270–277 (RSSAMDEN) are Cytoplasmic-facing. The chain crosses the membrane as a helical span at residues 278 to 317 (SEKKRKRAIKLIVTVLAMYLICFTPSNLLLVVHYFLIKSQ). Residues 318-323 (GQSHVY) are Extracellular-facing. Residues 324 to 347 (ALYIVALCLSTLNSCIDPFVYYFV) form a helical membrane-spanning segment. The Cytoplasmic portion of the chain corresponds to 348-397 (SHDFRDHAKNALLCRSVRTVKQMQVSLTSKKHSRKSSSYSSSSTTVKTSY). Cysteine 361 is lipidated: S-palmitoyl cysteine. The tract at residues 373 to 397 (SLTSKKHSRKSSSYSSSSTTVKTSY) is disordered. Residues 383-397 (SSSYSSSSTTVKTSY) show a composition bias toward low complexity.

It belongs to the G-protein coupled receptor 1 family. Interacts with TLR4, COPS5 and TMED2. Interacts with GNAQ, GNA11, GNA12, GNA13 and GNA14. Post-translationally, a proteolytic cleavage generates a new N-terminus that functions as a tethered ligand. Activating serine proteases include trypsin, mast cell tryptase, coagulation factors VII and Xa, myeloblastin/PRTN3 and membrane-type serine protease 1/ST14. Subsequent cleavage by serine proteases, including neutrophil elastase and cathepsin G, leads to receptor deactivation. At least in part, implicated proteases are also shown to activate the receptor; the glycosylation status of the receptor is thought to contribute to the difference. In addition to conventional trypsin-like proteases activated by other proteases and glycosidases derived from bacteria, fungi and insects. Activated by serine protease allergens such as dust mite Der p3 and Der p9 and mold Pen c13. Activated by P.gingivalis arginine-specific (trypsin-like) cysteine proteinases called gingipains. Activated by S.griseus exogenous chitinase. Activated by A.alternata aspartate protease; the cleavage generates non-conventional processed forms. Proteolytically cleaved by coagulation factor Xa (F10); cleavage results in activation of F2RL1-dependent signaling. N-glycosylated and sialylated. In terms of processing, multiple phosphorylated on serine and threonine residues in the cytoplasmic region upon receptor activation; required for receptor desensitization and recruitment of beta-arrestin. Post-translationally, monoubiquitinated by CBL at the plasma membrane and in early endosomes; not required for receptor endocytosis but for translocation to late endosomes or lysosomes. Deubiquitination involves STAMBP and USP8; required for lysosomal trafficking and receptor degradation. As to expression, widely expressed in tissues with especially high levels in pancreas, liver, kidney, small intestine, and colon. Moderate expression is detected in many organs, but none in brain or skeletal muscle. Expressed in endothelial cells.

It localises to the cell membrane. With respect to regulation, activated upon interaction by mucunain, a cowhage (Mucuna pruriens) plant cysteine proteinase. Its function is as follows. Receptor for trypsin and trypsin-like enzymes coupled to G proteins. Its function is mediated through the activation of several signaling pathways including phospholipase C (PLC), intracellular calcium, mitogen-activated protein kinase (MAPK), I-kappaB kinase/NF-kappaB and Rho. Can also be transactivated by cleaved F2R/PAR1. Involved in modulation of inflammatory responses and regulation of innate and adaptive immunity, and acts as a sensor for proteolytic enzymes generated during infection. Generally is promoting inflammation. Can signal synergistically with TLR4 and probably TLR2 in inflammatory responses and modulates TLR3 signaling. Has a protective role in establishing the endothelial barrier; the activity involves coagulation factor X. Regulates endothelial cell barrier integrity during neutrophil extravasation, probably following proteolytic cleavage by PRTN3. Proposed to have a bronchoprotective role in airway epithelium, but also shown to compromise the airway epithelial barrier by interrupting E-cadherin adhesion. Involved in the regulation of vascular tone; activation results in hypotension presumably mediated by vasodilation. Associates with a subset of G proteins alpha subunits such as GNAQ, GNA11, GNA14, GNA12 and GNA13, but probably not with G(o)-alpha, G(i) subunit alpha-1 and G(i) subunit alpha-2. However, according to PubMed:21627585 can signal through G(i) subunit alpha. Believed to be a class B receptor which internalizes as a complex with arrestin and traffic with it to endosomal vesicles, presumably as desensitized receptor, for extended periods of time. Mediates inhibition of TNF-alpha stimulated JNK phosphorylation via coupling to GNAQ and GNA11; the function involves dissociation of RIPK1 and TRADD from TNFR1. Mediates phosphorylation of nuclear factor NF-kappa-B RELA subunit at 'Ser-536'; the function involves IKBKB and is predominantly independent of G proteins. Involved in cellular migration. Involved in cytoskeletal rearrangement and chemotaxis through beta-arrestin-promoted scaffolds; the function is independent of GNAQ and GNA11 and involves promotion of cofilin dephosphorylation and actin filament severing. Induces redistribution of COPS5 from the plasma membrane to the cytosol and activation of the JNK cascade is mediated by COPS5. Involved in the recruitment of leukocytes to the sites of inflammation and is the major PAR receptor capable of modulating eosinophil function such as pro-inflammatory cytokine secretion, superoxide production and degranulation. During inflammation promotes dendritic cell maturation, trafficking to the lymph nodes and subsequent T-cell activation. Involved in antimicrobial response of innate immune cells; activation enhances phagocytosis of Gram-positive and killing of Gram-negative bacteria. Acts synergistically with interferon-gamma in enhancing antiviral responses. Implicated in a number of acute and chronic inflammatory diseases such as of the joints, lungs, brain, gastrointestinal tract, periodontium, skin, and vascular systems, and in autoimmune disorders. Probably mediates activation of pro-inflammatory and pro-fibrotic responses in fibroblasts, triggered by coagulation factor Xa (F10). Mediates activation of barrier protective signaling responses in endothelial cells, triggered by coagulation factor Xa (F10). The chain is Proteinase-activated receptor 2 (F2RL1) from Homo sapiens (Human).